A 418-amino-acid polypeptide reads, in one-letter code: AP-1 complex subunit mu (418 aa).

Residues 176–417 (NNEAYFDVTE…VTKAGKFQVR (242 aa)) form the MHD domain.

The protein belongs to the adaptor complexes medium subunit family. As to quaternary structure, adaptor protein complex 1 (AP-1) is a heterotetramer composed of two large adaptins (gamma- and beta'-type subunits), a medium adaptin (mu-type subunit AP47) and a small adaptin (sigma-type subunit AP19). Regulated by phosphorylation.

It localises to the golgi apparatus. The protein localises to the cytoplasmic vesicle. Its subcellular location is the clathrin-coated vesicle membrane. Component of the adapter complexes which link clathrin to receptors in coated vesicles. Clathrin-associated protein complexes are believed to interact with the cytoplasmic tails of membrane proteins, leading to their selection and concentration. AP47 is a subunit of the plasma membrane adapter. The polypeptide is AP-1 complex subunit mu (Diplobatis ommata (Ocellated electric ray)).